Reading from the N-terminus, the 145-residue chain is 6-pyruvoyl tetrahydrobiopterin synthase (145 aa).

S19 is modified (phosphoserine; by PKG). H24 serves as a coordination point for Zn(2+). At S28 the chain carries Phosphoserine. C43 functions as the Proton acceptor in the catalytic mechanism. Zn(2+) is bound by residues H49 and H51. The Charge relay system role is filled by H90. At Y128 the chain carries Phosphotyrosine. The active-site Charge relay system is the E134.

It belongs to the PTPS family. As to quaternary structure, homohexamer formed of two homotrimers in a head to head fashion. The cofactor is Zn(2+). In terms of processing, phosphorylation of Ser-19 is required for maximal enzyme activity.

The enzyme catalyses 7,8-dihydroneopterin 3'-triphosphate = 6-pyruvoyl-5,6,7,8-tetrahydropterin + triphosphate + H(+). Its pathway is cofactor biosynthesis; tetrahydrobiopterin biosynthesis; tetrahydrobiopterin from 7,8-dihydroneopterin triphosphate: step 1/3. Involved in the biosynthesis of tetrahydrobiopterin, an essential cofactor of aromatic amino acid hydroxylases. Catalyzes the transformation of 7,8-dihydroneopterin triphosphate into 6-pyruvoyl tetrahydropterin. The sequence is that of 6-pyruvoyl tetrahydrobiopterin synthase (PTS) from Homo sapiens (Human).